Consider the following 429-residue polypeptide: MQGTLIRHLGKHVDEEVSIQGWLYNKRSSGKIQFLIVRDGTGLVQGVLVKKEAPEIFELAKELTQESAIRLRGIVREEPRSMGGYELTVTGLEIINLAQEYPISHKEHGVDFLMDRRHLWMRTPRQNAILRIRAEIEQAARDFFNQNDFTLVDSPIITPAACEGTTTLFELDYHGEKAYLSQSGQLYNEASAMAVGRMYCFGPTFRAEKSKTRRHLMEFWMIEAEAAFFDFEDNMKLQEEMVYFIVQRVLERRRQDLELLGRDISKLEAIKLPFPRLSYTEAVELLKSKGEAFEWGEDFGAPHETIISENFESPVFIHRYPTEIKAFYMKPDPEDGRVVLGADLIAPEGYGEMIGGGQRIDDLQLLEQRLEEHKLPKEAFEWYLDLRRYGSVPHSGFGLGLERTVAWICKLDHVRETIPYPRMLYRVYP.

The protein belongs to the class-II aminoacyl-tRNA synthetase family. As to quaternary structure, homodimer.

Its subcellular location is the cytoplasm. It catalyses the reaction tRNA(Asn) + L-asparagine + ATP = L-asparaginyl-tRNA(Asn) + AMP + diphosphate + H(+). This Desulforamulus reducens (strain ATCC BAA-1160 / DSM 100696 / MI-1) (Desulfotomaculum reducens) protein is Asparagine--tRNA ligase.